We begin with the raw amino-acid sequence, 453 residues long: Trigger factor (453 aa).

The PPIase FKBP-type domain occupies 171–256 (GDRVTISFKG…ASLIEAPQDI (86 aa)).

Belongs to the FKBP-type PPIase family. Tig subfamily.

It is found in the cytoplasm. The catalysed reaction is [protein]-peptidylproline (omega=180) = [protein]-peptidylproline (omega=0). Functionally, involved in protein export. Acts as a chaperone by maintaining the newly synthesized protein in an open conformation. Functions as a peptidyl-prolyl cis-trans isomerase. In Nitrobacter hamburgensis (strain DSM 10229 / NCIMB 13809 / X14), this protein is Trigger factor.